Reading from the N-terminus, the 132-residue chain is Inactive D-aminoacyl-tRNA deacylase (132 aa).

The protein belongs to the DTD family.

A non-functional D-aminoacyl-tRNA deacylase. The polypeptide is Inactive D-aminoacyl-tRNA deacylase (Bacillus subtilis (strain 168)).